The chain runs to 422 residues: Solanesyl diphosphate synthase 3, chloroplastic/mitochondrial (422 aa).

Residues 1–32 (MLFTRSVARISSKFLRNRSFYGSSQSLASHRF) constitute a chloroplast and mitochondrion transit peptide. Residues Lys-125, Arg-128, and His-174 each coordinate isopentenyl diphosphate. Mg(2+)-binding residues include Asp-181 and Asp-185. Arg-190 lines the an all-trans-polyprenyl diphosphate pocket. Isopentenyl diphosphate is bound at residue Arg-191. The an all-trans-polyprenyl diphosphate site is built by Lys-267, Thr-268, Gln-305, and Lys-322.

It belongs to the FPP/GGPP synthase family. As to quaternary structure, homodimer. It depends on Mg(2+) as a cofactor. In terms of tissue distribution, ubiquitous. Highest expression in seeds and shoot apical meristem.

The protein resides in the plastid. Its subcellular location is the chloroplast. It localises to the mitochondrion. It catalyses the reaction 5 isopentenyl diphosphate + (2E,6E,10E)-geranylgeranyl diphosphate = all-trans-nonaprenyl diphosphate + 5 diphosphate. In terms of biological role, may be involved in the supply of solanesyl diphosphate for ubiquinone-9 (UQ-9) biosynthesis in mitochondria. Synthesizes C25 to C45 medium / long-chain products depending on the type of substrate available. Can use geranyl diphosphate, farnesyl diphosphate or geranylgeranyl diphosphate as substrates, but not dimethylallyl diphosphate. The chain is Solanesyl diphosphate synthase 3, chloroplastic/mitochondrial from Arabidopsis thaliana (Mouse-ear cress).